The chain runs to 185 residues: Ribosome-recycling factor (185 aa).

This sequence belongs to the RRF family.

The protein resides in the cytoplasm. Responsible for the release of ribosomes from messenger RNA at the termination of protein biosynthesis. May increase the efficiency of translation by recycling ribosomes from one round of translation to another. This is Ribosome-recycling factor from Haemophilus influenzae (strain 86-028NP).